The chain runs to 251 residues: Probable transcriptional regulatory protein SYO3AOP1_0685 (251 aa).

Belongs to the TACO1 family.

It localises to the cytoplasm. The sequence is that of Probable transcriptional regulatory protein SYO3AOP1_0685 from Sulfurihydrogenibium sp. (strain YO3AOP1).